Reading from the N-terminus, the 231-residue chain is Protein OPG061 (231 aa).

Belongs to the orthopoxvirus OPG058 family.

The protein localises to the host nucleus. It localises to the host nucleolus. The polypeptide is Protein OPG061 (OPG061) (Cynomys gunnisoni (Gunnison's prairie dog)).